A 428-amino-acid polypeptide reads, in one-letter code: A-kinase anchor protein 5 (428 aa).

The interval 1–170 (MEITVSEIQV…VTKTQTQSDD (170 aa)) is essential to the intracellular anchoring function. 2 disordered regions span residues 1-207 (MEIT…SPGE) and 237-313 (LEEK…TELS). Residues 10-32 (VESKDETRSAEVRPQDERQEEKA) show a composition bias toward basic and acidic residues. Residue Cys-36 is the site of S-palmitoyl cysteine attachment. Positions 37 to 48 (FKRRKKAAKAMK) are enriched in basic residues. Positions 57 to 68 (DAAKKCPPEARA) are enriched in basic and acidic residues. Residues 76–96 (GGAWDSIKRLVTRRKRSESSK) carry the AKAP CaM-binding motif. At Thr-87 the chain carries Phosphothreonine; by PKC. Position 92 is a phosphoserine; by PKA (Ser-92). Ser-94 bears the Phosphoserine; by PKC mark. Residue Cys-129 is the site of S-palmitoyl cysteine attachment. The span at 133–156 (SKGEKRSNHSKIIEDSDRSVKVQE) shows a compositional bias: basic and acidic residues. The span at 161–170 (VTKTQTQSDD) shows a compositional bias: polar residues. Basic and acidic residues-rich tracts occupy residues 171–191 (QATKSKSPQDVREDVSQKGDD) and 290–311 (PDWKEHESREIVVEESKPKDTE). The segment at 389–410 (YETLLIETASSLVKNAIQLSIE) is RII-beta subunit binding domain. The tethers NFATC2 to CRAC channels stretch occupies residues 411–428 (QLVNEMASDDNTINNRLQ).

As to quaternary structure, binding protein for dimer of the RII-beta regulatory subunit of cAMP-dependent protein kinase (PKA) and also for the protein kinase C (PKC) and the phosphatase calcineurin (PP2B). Each enzyme is inhibited when bound to the anchoring protein. Also binds the beta2-adrenergic receptor. Part of a complex containing AKAP5, ADCY5, ADCY6 and PDE4C. Interacts with ADCY8, and enhances its phosphorylation at lipid rafts. Interacts with ORAI1 (isoform alpha) (via N-terminus) upon store depletion and in response to LTC4. Does not interact with ORAI2 and ORAI3 paralogs. Interacts (via leucine zipper domain) with NFATC2/NFAT1. Interacts with calmodulin; the interaction is calcium-independent. Interacts with KCNQ2; the interaction may help KCNQ2 channel complex to retain calcium-bound calmodulin. Palmitoylated. Palmitoylation at Cys-36 and Cys-129 play a key role in the targeting of AKAP5 to lipid rafts. Palmitoylation by ZDHHC2 is required for AKAP5 function in LTP-stimulated recycling endosome exocytosis. Predominantly in brain, and to a lesser extent in adrenal medulla, lung and anterior pituitary.

It localises to the postsynaptic recycling endosome membrane. Its function is as follows. Multivalent scaffold protein that anchors the cAMP-dependent protein kinase/PKA to cytoskeletal and/or organelle-associated proteins, targeting the signal carried by cAMP to specific intracellular effectors. Association with the beta2-adrenergic receptor (beta2-AR) not only regulates beta2-AR signaling pathway, but also the activation by PKA by switching off the beta2-AR signaling cascade. Plays a role in long term synaptic potentiation by regulating protein trafficking from the dendritic recycling endosomes to the plasma membrane and controlling both structural and functional plasticity at excitatory synapses. Associates with ORAI1 pore-forming subunit of CRAC channels in Ca(2+) signaling microdomains where it recruits NFATC2/NFAT1 and couples store-operated Ca(2+) influx to calmodulin and calcineurin signaling and activation of NFAT-dependent transcriptional responses. This Bos taurus (Bovine) protein is A-kinase anchor protein 5 (AKAP5).